Consider the following 469-residue polypeptide: Abscisic acid 8'-hydroxylase CYP707A2 (469 aa).

A helical transmembrane segment spans residues 3–23 (FVSMLCLFTFISLTLLLIHSI). Cys-414 contacts heme.

This sequence belongs to the cytochrome P450 family. Heme serves as cofactor. In terms of tissue distribution, expressed at low levels in fruit.

It localises to the membrane. The catalysed reaction is 2-cis-(+)-abscisate + reduced [NADPH--hemoprotein reductase] + O2 = (+)-8'-hydroxyabscisate + oxidized [NADPH--hemoprotein reductase] + H2O + H(+). Its pathway is plant hormone degradation; abscisic acid degradation. Negative regulator of fruit ripening involved in the oxidative degradation of abscisic acid (ABA). This is Abscisic acid 8'-hydroxylase CYP707A2 from Solanum lycopersicum (Tomato).